The primary structure comprises 156 residues: Transcription antitermination protein NusB (156 aa).

It belongs to the NusB family.

Functionally, involved in transcription antitermination. Required for transcription of ribosomal RNA (rRNA) genes. Binds specifically to the boxA antiterminator sequence of the ribosomal RNA (rrn) operons. The chain is Transcription antitermination protein NusB from Rickettsia bellii (strain OSU 85-389).